The chain runs to 132 residues: Histone H2A.1 (132 aa).

The protein belongs to the histone H2A family. The nucleosome is a histone octamer containing two molecules each of H2A, H2B, H3 and H4 assembled in one H3-H4 heterotetramer and two H2A-H2B heterodimers. The octamer wraps approximately 147 bp of DNA.

The protein resides in the nucleus. The protein localises to the chromosome. In terms of biological role, core component of nucleosome. Nucleosomes wrap and compact DNA into chromatin, limiting DNA accessibility to the cellular machineries which require DNA as a template. Histones thereby play a central role in transcription regulation, DNA repair, DNA replication and chromosomal stability. DNA accessibility is regulated via a complex set of post-translational modifications of histones, also called histone code, and nucleosome remodeling. The sequence is that of Histone H2A.1 from Leishmania infantum.